An 87-amino-acid polypeptide reads, in one-letter code: ParB-like nuclease domain-containing protein YnaK (87 aa).

The polypeptide is ParB-like nuclease domain-containing protein YnaK (ynaK) (Escherichia coli (strain K12)).